We begin with the raw amino-acid sequence, 497 residues long: WASH complex subunit homolog 1 (497 aa).

The disordered stretch occupies residues 306-497; sequence EASEPTEAEA…PPNFDDEEWD (192 aa). The segment covering 323 to 339 has biased composition (pro residues); sequence LPPPPPPMKLDPSPQPA. The span at 341-350 shows a compositional bias: low complexity; sequence TPVEITEIPP. Residues 351–372 show a composition bias toward pro residues; sequence IISPPAPPPPPPPPPPPPPPQT. One can recognise a WH2 domain in the interval 390–412; the sequence is GRSDLMAAIRAAGGAGNAKLSRI.

Belongs to the WASH1 family. In terms of assembly, component of the WASH core complex. Component of the DHIC (ddl-1-containing hsf-1 inhibitory) complex, which contains at least ddl-1, ddl-2, hsb-1 and hsf-1. Within the complex, interacts with ddl-1. Formation of the DHIC may be dependent upon the Insulin/IGF-1-like signaling (IIS) mediated pathway. In terms of tissue distribution, expressed in several neurons located throughout the body.

In terms of biological role, acts as a component of the WASH core complex that functions as a nucleation-promoting factor (NPF) at the surface of endosomes, where it recruits and activates the Arp2/3 complex to induce actin polymerization, playing a key role in the fission of tubules that serve as transport intermediates during endosome sorting. Acts as a component of the DHIC (ddl-1-containing hsf-1 inhibitory complex) which modulates lifespan by sequestering the heat shock transcription factor hsf-1 to negatively regulate its binding to DNA and its transcriptional activity. The sequence is that of WASH complex subunit homolog 1 from Caenorhabditis elegans.